Consider the following 186-residue polypeptide: Elongation factor P (186 aa).

It belongs to the elongation factor P family.

It is found in the cytoplasm. It participates in protein biosynthesis; polypeptide chain elongation. Involved in peptide bond synthesis. Stimulates efficient translation and peptide-bond synthesis on native or reconstituted 70S ribosomes in vitro. Probably functions indirectly by altering the affinity of the ribosome for aminoacyl-tRNA, thus increasing their reactivity as acceptors for peptidyl transferase. The protein is Elongation factor P of Cupriavidus metallidurans (strain ATCC 43123 / DSM 2839 / NBRC 102507 / CH34) (Ralstonia metallidurans).